Here is a 341-residue protein sequence, read N- to C-terminus: Protein pelota homolog (341 aa).

Belongs to the eukaryotic release factor 1 family. Pelota subfamily. In terms of assembly, monomer. A divalent metal cation serves as cofactor.

Its subcellular location is the cytoplasm. Functionally, may function in recognizing stalled ribosomes, interact with stem-loop structures in stalled mRNA molecules, and effect endonucleolytic cleavage of the mRNA. May play a role in the release non-functional ribosomes and degradation of damaged mRNAs. Has endoribonuclease activity. This chain is Protein pelota homolog, found in Methanoregula boonei (strain DSM 21154 / JCM 14090 / 6A8).